A 370-amino-acid polypeptide reads, in one-letter code: Chaperone protein DnaJ (370 aa).

Positions 4–68 constitute a J domain; that stretch reads DYYQVLGVSK…QKRAAYDRFG (65 aa). A CR-type zinc finger spans residues 133-211; that stretch reads GIEKNISFSS…CHGMGRYHKQ (79 aa). Zn(2+)-binding residues include cysteine 146, cysteine 149, cysteine 163, cysteine 166, cysteine 185, cysteine 188, cysteine 199, and cysteine 202. CXXCXGXG motif repeat units lie at residues 146 to 153, 163 to 170, 185 to 192, and 199 to 206; these read CDACHGTG, CDSCGGVG, CHKCQGNG, and CKKCHGMG.

This sequence belongs to the DnaJ family. Homodimer. Zn(2+) is required as a cofactor.

The protein localises to the cytoplasm. Functionally, participates actively in the response to hyperosmotic and heat shock by preventing the aggregation of stress-denatured proteins and by disaggregating proteins, also in an autonomous, DnaK-independent fashion. Unfolded proteins bind initially to DnaJ; upon interaction with the DnaJ-bound protein, DnaK hydrolyzes its bound ATP, resulting in the formation of a stable complex. GrpE releases ADP from DnaK; ATP binding to DnaK triggers the release of the substrate protein, thus completing the reaction cycle. Several rounds of ATP-dependent interactions between DnaJ, DnaK and GrpE are required for fully efficient folding. Also involved, together with DnaK and GrpE, in the DNA replication of plasmids through activation of initiation proteins. In Rickettsia typhi (strain ATCC VR-144 / Wilmington), this protein is Chaperone protein DnaJ.